Consider the following 222-residue polypeptide: Formimidoylglutamase (222 aa).

Residues His-34, Asp-59, His-61, Asp-63, Asp-150, and Asp-152 each coordinate Mn(2+).

It belongs to the arginase family. The cofactor is Mn(2+).

It catalyses the reaction N-formimidoyl-L-glutamate + H2O = formamide + L-glutamate. The protein operates within amino-acid degradation; L-histidine degradation into L-glutamate; L-glutamate from N-formimidoyl-L-glutamate (hydrolase route): step 1/1. In terms of biological role, catalyzes the conversion of N-formimidoyl-L-glutamate to L-glutamate and formamide. This Klebsiella aerogenes (Enterobacter aerogenes) protein is Formimidoylglutamase (hutG).